A 317-amino-acid chain; its full sequence is Putative 2-hydroxyacid dehydrogenase SE_1879 (317 aa).

NAD(+) contacts are provided by residues 155 to 156 (EI), 234 to 236 (AGR), and Asp-260. Arg-236 is an active-site residue. Glu-265 is a catalytic residue. His-283 serves as the catalytic Proton donor. 283–286 (HIGN) is an NAD(+) binding site.

It belongs to the D-isomer specific 2-hydroxyacid dehydrogenase family.

This Staphylococcus epidermidis (strain ATCC 12228 / FDA PCI 1200) protein is Putative 2-hydroxyacid dehydrogenase SE_1879.